Consider the following 310-residue polypeptide: GMP synthase [glutamine-hydrolyzing] subunit B (310 aa).

Residues 2–185 (FKTEPFIEES…LGLPDQIAHR (184 aa)) enclose the GMPS ATP-PPase domain. ATP is bound at residue 29–35 (SGGVDSA).

In terms of assembly, heterodimer composed of a glutamine amidotransferase subunit (A) and a GMP-binding subunit (B).

The enzyme catalyses XMP + L-glutamine + ATP + H2O = GMP + L-glutamate + AMP + diphosphate + 2 H(+). The protein operates within purine metabolism; GMP biosynthesis; GMP from XMP (L-Gln route): step 1/1. In terms of biological role, catalyzes the synthesis of GMP from XMP. The polypeptide is GMP synthase [glutamine-hydrolyzing] subunit B (Methanococcus maripaludis (strain DSM 14266 / JCM 13030 / NBRC 101832 / S2 / LL)).